Here is an 848-residue protein sequence, read N- to C-terminus: Adenylate cyclase (848 aa).

The tract at residues 1–535 (MYLYIETLKQ…DVSHHFPLRL (535 aa)) is catalytic. A regulatory region spans residues 541 to 848 (KALYSPCEIR…DAPLLQQYFS (308 aa)). His609 bears the Phosphohistidine; by CRR mark.

Belongs to the adenylyl cyclase class-1 family.

The protein localises to the cytoplasm. It catalyses the reaction ATP = 3',5'-cyclic AMP + diphosphate. In Escherichia coli O6:H1 (strain CFT073 / ATCC 700928 / UPEC), this protein is Adenylate cyclase (cyaA).